Here is a 165-residue protein sequence, read N- to C-terminus: Endoribonuclease YbeY (165 aa).

Positions 119, 123, and 129 each coordinate Zn(2+).

Belongs to the endoribonuclease YbeY family. Zn(2+) is required as a cofactor.

The protein resides in the cytoplasm. Single strand-specific metallo-endoribonuclease involved in late-stage 70S ribosome quality control and in maturation of the 3' terminus of the 16S rRNA. This chain is Endoribonuclease YbeY, found in Streptomyces coelicolor (strain ATCC BAA-471 / A3(2) / M145).